The sequence spans 234 residues: Carboxy-S-adenosyl-L-methionine synthase (234 aa).

Residues tyrosine 35, 60-62, 83-84, and arginine 191 each bind S-adenosyl-L-methionine; these read GCS and DN.

This sequence belongs to the class I-like SAM-binding methyltransferase superfamily. Cx-SAM synthase family. As to quaternary structure, homodimer.

It carries out the reaction prephenate + S-adenosyl-L-methionine = carboxy-S-adenosyl-L-methionine + 3-phenylpyruvate + H2O. Functionally, catalyzes the conversion of S-adenosyl-L-methionine (SAM) to carboxy-S-adenosyl-L-methionine (Cx-SAM). The chain is Carboxy-S-adenosyl-L-methionine synthase from Campylobacter lari (strain RM2100 / D67 / ATCC BAA-1060).